A 116-amino-acid chain; its full sequence is LVLIAVERHQLIINPRGWRPSNRHAYVGIAVIWVLAVASSLPFLIYQVLTDEPFQNVTLDAFKDKYVCFDKFPSDSHRLSYTTLLLVLQYFGPLCFIFICYFKIYIRLKRRNNMMD.

Residues 1 to 6 (LVLIAV) form a helical membrane-spanning segment. Residues 7–24 (ERHQLIINPRGWRPSNRH) are Cytoplasmic-facing. The chain crosses the membrane as a helical span at residues 25 to 45 (AYVGIAVIWVLAVASSLPFLI). At 46–81 (YQVLTDEPFQNVTLDAFKDKYVCFDKFPSDSHRLSY) the chain is on the extracellular side. The N-linked (GlcNAc...) asparagine glycan is linked to asparagine 56. Residues 82-102 (TTLLLVLQYFGPLCFIFICYF) form a helical membrane-spanning segment. The Cytoplasmic portion of the chain corresponds to 103–116 (KIYIRLKRRNNMMD).

It belongs to the G-protein coupled receptor 1 family.

It is found in the cell membrane. Receptor for neuropeptide Y and peptide YY. The protein is Neuropeptide Y receptor type 1 (NPY1R) of Ovis aries (Sheep).